The primary structure comprises 148 residues: Endoribonuclease YbeY (148 aa).

3 residues coordinate Zn(2+): His-113, His-117, and His-123.

This sequence belongs to the endoribonuclease YbeY family. The cofactor is Zn(2+).

It localises to the cytoplasm. Single strand-specific metallo-endoribonuclease involved in late-stage 70S ribosome quality control and in maturation of the 3' terminus of the 16S rRNA. In Borrelia duttonii (strain Ly), this protein is Endoribonuclease YbeY.